We begin with the raw amino-acid sequence, 947 residues long: Altered inheritance of mitochondria protein 3 (947 aa).

Disordered regions lie at residues 1–332 (MGFW…NALL), 354–810 (MSST…QDEV), and 824–904 (RKTN…KSLE). Residues 36-54 (ASKKHYNNSKARRERKSGK) are compositionally biased toward basic residues. Phosphoserine is present on residues serine 57, serine 58, and serine 64. A compositionally biased stretch (acidic residues) spans 59 to 69 (DEEYDSEDEME). Basic and acidic residues predominate over residues 70–84 (YERKPTDIRSLKDPK). Composition is skewed to low complexity over residues 93-105 (PGQK…QQQQ) and 130-163 (QSQY…GVVP). Polar residues predominate over residues 177 to 255 (GSNSNATSYQ…YVSHGSTNLG (79 aa)). Composition is skewed to low complexity over residues 256 to 289 (QSQF…QQGQ) and 313 to 332 (QQQQ…NALL). The span at 354–367 (MSSTTNMQDSNPSY) shows a compositional bias: polar residues. Over residues 379–395 (GGQPPVPVRMQPQPPQP) the composition is skewed to pro residues. The segment covering 466–475 (IQPNTTSSAA) has biased composition (polar residues). Serine 476 bears the Phosphoserine mark. Basic and acidic residues-rich tracts occupy residues 488-502 (DNER…DEST) and 526-541 (HGLD…KNAP). The span at 633 to 644 (VPQSKPQSQSQF) shows a compositional bias: polar residues. Over residues 667–676 (SQSSNSSDSS) the composition is skewed to low complexity. At threonine 729 the chain carries Phosphothreonine. The span at 749 to 759 (DSSKDANKYEK) shows a compositional bias: basic and acidic residues. The segment covering 763 to 774 (PVTSSIQAQQST) has biased composition (polar residues). Threonine 861 is modified (phosphothreonine). The segment covering 862–879 (PPRPPPSRSSPKKVPPVV) has biased composition (pro residues). Basic residues predominate over residues 888–899 (KKPPVVPKKKPL).

The protein belongs to the AIM3 family. In terms of assembly, interacts with RVS167.

It localises to the membrane raft. The polypeptide is Altered inheritance of mitochondria protein 3 (AIM3) (Saccharomyces cerevisiae (strain JAY291) (Baker's yeast)).